We begin with the raw amino-acid sequence, 49 residues long: Large ribosomal subunit protein bL33 (49 aa).

It belongs to the bacterial ribosomal protein bL33 family.

In Nitratidesulfovibrio vulgaris (strain ATCC 29579 / DSM 644 / CCUG 34227 / NCIMB 8303 / VKM B-1760 / Hildenborough) (Desulfovibrio vulgaris), this protein is Large ribosomal subunit protein bL33.